Consider the following 511-residue polypeptide: ATP synthase subunit alpha, plastid (511 aa).

Residue 170–177 (GDRQTGKT) coordinates ATP.

This sequence belongs to the ATPase alpha/beta chains family. In terms of assembly, F-type ATPases have 2 components, CF(1) - the catalytic core - and CF(0) - the membrane proton channel. CF(1) has five subunits: alpha(3), beta(3), gamma(1), delta(1), epsilon(1). CF(0) has four main subunits: a, b, b' and c.

The protein localises to the plastid membrane. It catalyses the reaction ATP + H2O + 4 H(+)(in) = ADP + phosphate + 5 H(+)(out). Functionally, produces ATP from ADP in the presence of a proton gradient across the membrane. The alpha chain is a regulatory subunit. The sequence is that of ATP synthase subunit alpha, plastid from Cuscuta reflexa (Southern Asian dodder).